We begin with the raw amino-acid sequence, 352 residues long: Photosystem II D2 protein (352 aa).

The chain crosses the membrane as a helical span at residues 40 to 60; that stretch reads CAYLALGGWLTGTTFVTSWYT. H117 lines the chlorophyll a pocket. The chain crosses the membrane as a helical span at residues 124–140; the sequence is GFMLRQFEIAQSVRLRP. Positions 129 and 142 each coordinate pheophytin a. The chain crosses the membrane as a helical span at residues 152 to 165; it reads VFVSVFLIYPLGQS. Position 197 (H197) interacts with chlorophyll a. Residues 207-227 form a helical membrane-spanning segment; sequence AALLCAIHGATVENTLFEDGD. 2 residues coordinate a plastoquinone: H214 and F261. A Fe cation-binding site is contributed by H214. H268 is a binding site for Fe cation. Residues 278–294 form a helical membrane-spanning segment; it reads GLWMSALGVVGLALNLR.

It belongs to the reaction center PufL/M/PsbA/D family. PSII is composed of 1 copy each of membrane proteins PsbA, PsbB, PsbC, PsbD, PsbE, PsbF, PsbH, PsbI, PsbJ, PsbK, PsbL, PsbM, PsbT, PsbY, PsbZ, Psb30/Ycf12, at least 3 peripheral proteins of the oxygen-evolving complex and a large number of cofactors. It forms dimeric complexes. It depends on The D1/D2 heterodimer binds P680, chlorophylls that are the primary electron donor of PSII, and subsequent electron acceptors. It shares a non-heme iron and each subunit binds pheophytin, quinone, additional chlorophylls, carotenoids and lipids. There is also a Cl(-1) ion associated with D1 and D2, which is required for oxygen evolution. The PSII complex binds additional chlorophylls, carotenoids and specific lipids. as a cofactor.

The protein resides in the plastid. The protein localises to the chloroplast thylakoid membrane. It catalyses the reaction 2 a plastoquinone + 4 hnu + 2 H2O = 2 a plastoquinol + O2. Photosystem II (PSII) is a light-driven water:plastoquinone oxidoreductase that uses light energy to abstract electrons from H(2)O, generating O(2) and a proton gradient subsequently used for ATP formation. It consists of a core antenna complex that captures photons, and an electron transfer chain that converts photonic excitation into a charge separation. The D1/D2 (PsbA/PsbD) reaction center heterodimer binds P680, the primary electron donor of PSII as well as several subsequent electron acceptors. D2 is needed for assembly of a stable PSII complex. This chain is Photosystem II D2 protein, found in Bigelowiella natans (Pedinomonas minutissima).